The chain runs to 161 residues: 2-C-methyl-D-erythritol 2,4-cyclodiphosphate synthase (161 aa).

A divalent metal cation contacts are provided by Asp13 and His15. 4-CDP-2-C-methyl-D-erythritol 2-phosphate-binding positions include 13-15 (DAH) and 40-41 (HS). His48 is a binding site for a divalent metal cation. 62–64 (DIG) serves as a coordination point for 4-CDP-2-C-methyl-D-erythritol 2-phosphate.

It belongs to the IspF family. In terms of assembly, homotrimer. It depends on a divalent metal cation as a cofactor.

The enzyme catalyses 4-CDP-2-C-methyl-D-erythritol 2-phosphate = 2-C-methyl-D-erythritol 2,4-cyclic diphosphate + CMP. It participates in isoprenoid biosynthesis; isopentenyl diphosphate biosynthesis via DXP pathway; isopentenyl diphosphate from 1-deoxy-D-xylulose 5-phosphate: step 4/6. In terms of biological role, involved in the biosynthesis of isopentenyl diphosphate (IPP) and dimethylallyl diphosphate (DMAPP), two major building blocks of isoprenoid compounds. Catalyzes the conversion of 4-diphosphocytidyl-2-C-methyl-D-erythritol 2-phosphate (CDP-ME2P) to 2-C-methyl-D-erythritol 2,4-cyclodiphosphate (ME-CPP) with a corresponding release of cytidine 5-monophosphate (CMP). The polypeptide is 2-C-methyl-D-erythritol 2,4-cyclodiphosphate synthase (Deinococcus radiodurans (strain ATCC 13939 / DSM 20539 / JCM 16871 / CCUG 27074 / LMG 4051 / NBRC 15346 / NCIMB 9279 / VKM B-1422 / R1)).